The sequence spans 368 residues: Probable endopolygalacturonase A (368 aa).

Residues Met-1 to Ala-18 form the signal peptide. Residues Ala-19–Arg-31 constitute a propeptide that is removed on maturation. A disulfide bond links Cys-35 and Cys-50. 7 PbH1 repeats span residues Leu-140 to Ala-162, Leu-167 to Glu-192, Ser-193 to Ser-214, Gly-215 to Ser-235, Val-244 to Thr-265, Val-273 to Gln-295, and Thr-307 to Gly-352. Asp-207 (proton donor) is an active-site residue. A disulfide bridge links Cys-209 with Cys-225. Residue His-229 is part of the active site. Residue Asn-246 is glycosylated (N-linked (GlcNAc...) asparagine). Disulfide bonds link Cys-335-Cys-340 and Cys-359-Cys-368.

The protein belongs to the glycosyl hydrolase 28 family.

The protein localises to the secreted. The enzyme catalyses (1,4-alpha-D-galacturonosyl)n+m + H2O = (1,4-alpha-D-galacturonosyl)n + (1,4-alpha-D-galacturonosyl)m.. Its function is as follows. Involved in maceration and soft-rotting of plant tissue. Hydrolyzes the 1,4-alpha glycosidic bonds of de-esterified pectate in the smooth region of the plant cell wall. The sequence is that of Probable endopolygalacturonase A (pgaA) from Neosartorya fischeri (strain ATCC 1020 / DSM 3700 / CBS 544.65 / FGSC A1164 / JCM 1740 / NRRL 181 / WB 181) (Aspergillus fischerianus).